The following is a 441-amino-acid chain: Arginine biosynthesis bifunctional protein ArgJ, mitochondrial (441 aa).

Substrate contacts are provided by Thr-177, Lys-203, Thr-214, Glu-303, Asn-436, and Ser-441. Catalysis depends on Thr-214, which acts as the Nucleophile.

Belongs to the ArgJ family. In terms of assembly, heterodimer of an alpha and a beta chain. The alpha and beta chains are autoproteolytically processed from a single precursor protein within the mitochondrion.

It localises to the mitochondrion matrix. The catalysed reaction is N(2)-acetyl-L-ornithine + L-glutamate = N-acetyl-L-glutamate + L-ornithine. The enzyme catalyses L-glutamate + acetyl-CoA = N-acetyl-L-glutamate + CoA + H(+). It participates in amino-acid biosynthesis; L-arginine biosynthesis; L-ornithine and N-acetyl-L-glutamate from L-glutamate and N(2)-acetyl-L-ornithine (cyclic): step 1/1. It functions in the pathway amino-acid biosynthesis; L-arginine biosynthesis; N(2)-acetyl-L-ornithine from L-glutamate: step 1/4. Its function is as follows. Catalyzes two activities which are involved in the cyclic version of arginine biosynthesis: the synthesis of acetylglutamate from glutamate and acetyl-CoA, and of ornithine by transacetylation between acetylornithine and glutamate. The chain is Arginine biosynthesis bifunctional protein ArgJ, mitochondrial from Debaryomyces hansenii (strain ATCC 36239 / CBS 767 / BCRC 21394 / JCM 1990 / NBRC 0083 / IGC 2968) (Yeast).